The following is a 315-amino-acid chain: Aspartate carbamoyltransferase catalytic subunit (315 aa).

Positions 55 and 56 each coordinate carbamoyl phosphate. Lysine 83 contributes to the L-aspartate binding site. The carbamoyl phosphate site is built by arginine 105, histidine 138, and glutamine 141. Positions 171 and 225 each coordinate L-aspartate. Positions 266 and 267 each coordinate carbamoyl phosphate.

The protein belongs to the aspartate/ornithine carbamoyltransferase superfamily. ATCase family. As to quaternary structure, heterododecamer (2C3:3R2) of six catalytic PyrB chains organized as two trimers (C3), and six regulatory PyrI chains organized as three dimers (R2).

It catalyses the reaction carbamoyl phosphate + L-aspartate = N-carbamoyl-L-aspartate + phosphate + H(+). Its pathway is pyrimidine metabolism; UMP biosynthesis via de novo pathway; (S)-dihydroorotate from bicarbonate: step 2/3. Catalyzes the condensation of carbamoyl phosphate and aspartate to form carbamoyl aspartate and inorganic phosphate, the committed step in the de novo pyrimidine nucleotide biosynthesis pathway. This is Aspartate carbamoyltransferase catalytic subunit from Mycolicibacterium gilvum (strain PYR-GCK) (Mycobacterium gilvum (strain PYR-GCK)).